A 1594-amino-acid chain; its full sequence is MIRRLSVAFLSTYRGPQADAPGVTSTGPLAVAAHDDLVSDDLVAAHYRLASMRAPGETKAAVYPGDAGSGAALQIVTDQAPMLVDSVTVLLHRHGIAYTAIMNPVFRVRRGLDGELLDVRPAAEAAPGDGADECWILVPITAAADGEALTEATRLVPGILAEARQIGLDSGAMIAALHGLANDLATDLEGHFPNAERKEVAALLRWLADGHFVLLGYQQCVVGDGNAEVDPASRLGVLRLRNDVLPPLTDSDDLLVLAQATMPSYLRYGAYPYIVVVRESPGASRVIEHRFVGLFTVAAMNANALEIPLISRRVEEALAMAHRDPSHPGQLLRDIIQTIPRPELFALSSKQLLEMALAVVDLGSRRRTLLFLRADHLAHFVSCLVYLPRDRYTTAVRLEMQDILVRELGGAGIDYSARVSESPWAVVHFTVRLPEGTAADSVDTSLENESRIQDLLTEATRNWGDRMISAAAAASISPAALEHYAHAFPEDYKQAFAPQDAIADISLIEALQDDSVKLVLADTAEDRVWKLTWYLGGHSASLSELLPMLQSMGVVVLEERPFTLRRTDGLPVWIYQFKISPHPSIPHAPDAEAQRDTAQRFADAVTAIWHGRVEIDRFNELVMRAGLTWQQVVVLRAYAKYLRQAGFPYSQSHIESVLNENPHTTRSLIDLFEALFDPSQETDGRRDAQGAAAAVAADIDALVSLDTDRVLRAFANLIEATLRTNYFVARPDSARARNVLAFKLNPLVIKELPLPRPKFEIFVYSPRVEGVHLRFGFVARGGLRWSDRREDFRTEILGLVKAQAVKNAVIVPVGAKGGFVVKRPPTLTGDAAADREATRAEGVECYRLFISGLLDVTDNVDKATGAVVTPPEVVRRDGEDAYLVVAADKGTATFSDIANEVAKSYGFWLGDAFASGGSIGYDHKAMGITAKGAWESVKRHFREMGVDTQTQDFTVVGIGDMSGDVFGNGMLLSKHIRLVAAFDHRDIFLDPNPDAGRSWDERKRLFDLPRSSWADYDKSLISEGGGVYSRQQKSIPISPQVRTALGLDADVEELTPPALIKAILKAPVDLLWNGGIGTYIKAETEADADVGDRANDQIRVCGNQVRAKVIGEGGNLGVTALGRIEFDLAGGRINTDALDNSAGVDCSDHEVNIKILIDSAVTAGKVTPEERTELLLSMTDEVGELVLADNRDQNDLMGTSRANAASLLSVHARMIKDLVDNRGLNRELEALPSEKEIRRRADAGIGLTSPELATLMAHVKLALKDDVLASDLPDQEVFASRLPYYFPTRLREELHGEIRSHQLRREIITTMLVNDLVDTAGISYAYRITEDVGVGPVDAVRSYVAINAIFGIGDVWRRIRAAGDAGVPTSVTDRMTLDLRRLVDRAGRWLLNYRPQPLAVGAEINRFGAKVAALTPRMSEWLRGDDKAIVSKEAGDFASHGVPEDLAYHIATGLYQYSLLDVIDIADIVDREPDEVADTYFALMDHLGADALLTAVSRLSRDDRWHSLARLAIRDDIYGSLRALCFDVLAVGEPDENGEEKIAEWETTNSSRVTRARRTLTEIYKDGEQDLATLSVAARQIRSMTRTSGTGTTG.

K816 is a catalytic residue.

This sequence belongs to the Glu/Leu/Phe/Val dehydrogenases family. Interacts with (unphosphorylated) GarA.

It carries out the reaction L-glutamate + NAD(+) + H2O = 2-oxoglutarate + NH4(+) + NADH + H(+). Its activity is regulated as follows. Activity is inhibited by unphosphorylated GarA. Stimulated by manganese and magnesium. In terms of biological role, catalyzes the reversible conversion of L-glutamate to 2-oxoglutarate. Highly specific for NAD. This Mycolicibacterium smegmatis (strain ATCC 700084 / mc(2)155) (Mycobacterium smegmatis) protein is NAD-specific glutamate dehydrogenase (gdh).